Here is a 196-residue protein sequence, read N- to C-terminus: Dephospho-CoA kinase (196 aa).

Residues 5-196 (IIGLTGGIAT…QVDIALNFEL (192 aa)) enclose the DPCK domain. Residue 13–18 (ATGKTT) participates in ATP binding.

The protein belongs to the CoaE family.

It is found in the cytoplasm. The catalysed reaction is 3'-dephospho-CoA + ATP = ADP + CoA + H(+). It functions in the pathway cofactor biosynthesis; coenzyme A biosynthesis; CoA from (R)-pantothenate: step 5/5. In terms of biological role, catalyzes the phosphorylation of the 3'-hydroxyl group of dephosphocoenzyme A to form coenzyme A. The protein is Dephospho-CoA kinase of Nostoc sp. (strain PCC 7120 / SAG 25.82 / UTEX 2576).